The primary structure comprises 186 residues: Transposon Tn501 resolvase (186 aa).

In terms of domain architecture, Resolvase/invertase-type recombinase catalytic spans 4–137 (HRIGYVRVSS…EGITLAKQRG (134 aa)). The O-(5'-phospho-DNA)-serine intermediate role is filled by serine 12. The interval 17-38 (NPERQLEQTQVSKVFTDKASGK) is disordered. Residues 164–183 (KAQLAREFNISRETLYQYLR) constitute a DNA-binding region (H-T-H motif).

This sequence belongs to the site-specific recombinase resolvase family.

In terms of biological role, resolvase catalyzes the resolution (a site-specific recombination) of the cointegrated replicon to yield the final transposition products. In Pseudomonas aeruginosa, this protein is Transposon Tn501 resolvase (tnpR).